The chain runs to 257 residues: Insulin-induced gene 1 protein (257 aa).

Residues 1–64 lie on the Cytoplasmic side of the membrane; the sequence is MPRLHDHVWS…ARPGSWHHDL (64 aa). The interval 32–54 is disordered; sequence CPQGSGAPEPAPRSPRAGTAGCG. The helical transmembrane segment at 65-87 threads the bilayer; it reads VQRSLVLFSFGVVLALVLNLLQI. Topologically, residues 88-106 are extracellular; it reads QRNVTLFPDEVIATIFSSA. Residues 107-124 form a helical membrane-spanning segment; the sequence is WWVPPCCGTAAAVVGLLY. Residues 125 to 139 are Cytoplasmic-facing; sequence PCIDSHLGEPHKFKR. Residues K136 and K138 each participate in a glycyl lysine isopeptide (Lys-Gly) (interchain with G-Cter in ubiquitin) cross-link. Residues 140-162 traverse the membrane as a helical segment; it reads EWASVMRCIAVFVGINHASAKLD. Residues 163–165 lie on the Extracellular side of the membrane; it reads FAN. A helical membrane pass occupies residues 166–184; the sequence is NVQLSLTLAALSLGLWWTF. Residues 185–189 lie on the Cytoplasmic side of the membrane; sequence DRSRS. Position 187 is a phosphoserine (S187). The helical transmembrane segment at 190–211 threads the bilayer; it reads GLGLGITIAFLATLITQFLVYN. The Extracellular portion of the chain corresponds to 212–225; it reads GVYQYTSPDFLYIR. Residues 226-243 traverse the membrane as a helical segment; the sequence is SWLPCIFFSGGVTVGNIG. The Cytoplasmic segment spans residues 244–257; that stretch reads RQLAMGVPEKPHSD. The KxHxx motif lies at 251 to 257; the sequence is PEKPHSD.

This sequence belongs to the INSIG family. In terms of assembly, interacts with SCAP; interaction is direct and only takes place in the presence of sterols; it prevents interaction between SCAP and the coat protein complex II (COPII). Associates with the SCAP-SREBP complex (composed of SCAP and SREBF1/SREBP1 or SREBF2/SREBP2); association is mediated via its interaction with SCAP and only takes place in the presence of sterols. Interaction with SCAP is mutually exclusive with PAQR3. Interacts with HMGCR (via its SSD); the interaction, accelerated by sterols, leads to the recruitment of HMGCR to AMFR/gp78 for its ubiquitination by the sterol-mediated ERAD pathway. Interacts with AMFR/gp78 (via its membrane domain); the interaction recruits HMCR at the ER membrane for its ubiquitination and degradation by the sterol-mediated ERAD pathway. Interacts with SOAT2/ACAT2; leading to promote recruitment of AMFR/gp78 and subsequent ubiquitination of SOAT2/ACAT2. Interacts with RNF139. Interacts with RNF145. Phosphorylation at Ser-187 by PCK1 reduces binding to oxysterol, disrupting the interaction between INSIG1 and SCAP, thereby promoting nuclear translocation of SREBP proteins (SREBF1/SREBP1 or SREBF2/SREBP2) and subsequent transcription of downstream lipogenesis-related genes. Post-translationally, ubiquitinated by AMFR/gp78 in response to sterol deprivation, leading to its degradation: when the SCAP-SREBP complex becomes dissociated from INSIG1, INSIG1 is then ubiquitinated and degraded in proteasomes. Although ubiquitination is required for rapid INSIG1 degradation, it is not required for release of the SCAP-SREBP complex. Ubiquitinated by RNF139.

The protein resides in the endoplasmic reticulum membrane. Functionally, oxysterol-binding protein that mediates feedback control of cholesterol synthesis by controlling both endoplasmic reticulum to Golgi transport of SCAP and degradation of HMGCR. Acts as a negative regulator of cholesterol biosynthesis by mediating the retention of the SCAP-SREBP complex in the endoplasmic reticulum, thereby blocking the processing of sterol regulatory element-binding proteins (SREBPs) SREBF1/SREBP1 and SREBF2/SREBP2. Binds oxysterol, including 25-hydroxycholesterol, regulating interaction with SCAP and retention of the SCAP-SREBP complex in the endoplasmic reticulum. In presence of oxysterol, interacts with SCAP, retaining the SCAP-SREBP complex in the endoplasmic reticulum, thereby preventing SCAP from escorting SREBF1/SREBP1 and SREBF2/SREBP2 to the Golgi. Sterol deprivation or phosphorylation by PCK1 reduce oxysterol-binding, disrupting the interaction between INSIG1 and SCAP, thereby promoting Golgi transport of the SCAP-SREBP complex, followed by processing and nuclear translocation of SREBF1/SREBP1 and SREBF2/SREBP2. Also regulates cholesterol synthesis by regulating degradation of HMGCR: initiates the sterol-mediated ubiquitin-mediated endoplasmic reticulum-associated degradation (ERAD) of HMGCR via recruitment of the reductase to the ubiquitin ligases AMFR/gp78 and/or RNF139. Also regulates degradation of SOAT2/ACAT2 when the lipid levels are low: initiates the ubiquitin-mediated degradation of SOAT2/ACAT2 via recruitment of the ubiquitin ligases AMFR/gp78. The protein is Insulin-induced gene 1 protein of Cricetulus griseus (Chinese hamster).